The primary structure comprises 335 residues: MLKNNINDSKNLDRTFSIAPMLDWTDRHYRYFARLMSANALLYTEMVTTGAILHGRGDYLTYNQEEHPLALQLGGSNPVELARCAKLAAERGYDEVNLNVGCPSDRVQNGRFGACLMAEPELVAECVDAMKQVVDIPVTVKTRIGIDEQDSYEFLTHFIDTVMAKGCGEFIIHARKAWLQGLSPKENREIPPLDYDRVYQLKRDYPALNISINGGITSLEQAQTHLQHLDGVMVGREAYQNPYMLAQVDQVLCGSTKAVMSREAVIEAMLPYIEAHLQVGGRLNHITRHMIGLFQGLPGARAWRRYLSENAHKNGAGIEVVKLAYQSVQTDLVAQ.

Residues 20-22 and Gln72 contribute to the FMN site; that span reads PML. Residue Cys102 is the Proton donor of the active site. Residues Lys141, His173, 213 to 215, and 235 to 236 contribute to the FMN site; these read NGG and GR.

The protein belongs to the Dus family. DusA subfamily. The cofactor is FMN.

It carries out the reaction 5,6-dihydrouridine(20) in tRNA + NADP(+) = uridine(20) in tRNA + NADPH + H(+). It catalyses the reaction 5,6-dihydrouridine(20) in tRNA + NAD(+) = uridine(20) in tRNA + NADH + H(+). The catalysed reaction is 5,6-dihydrouridine(20a) in tRNA + NADP(+) = uridine(20a) in tRNA + NADPH + H(+). The enzyme catalyses 5,6-dihydrouridine(20a) in tRNA + NAD(+) = uridine(20a) in tRNA + NADH + H(+). Functionally, catalyzes the synthesis of 5,6-dihydrouridine (D), a modified base found in the D-loop of most tRNAs, via the reduction of the C5-C6 double bond in target uridines. Specifically modifies U20 and U20a in tRNAs. In Shewanella oneidensis (strain ATCC 700550 / JCM 31522 / CIP 106686 / LMG 19005 / NCIMB 14063 / MR-1), this protein is tRNA-dihydrouridine(20/20a) synthase.